Reading from the N-terminus, the 97-residue chain is Large ribosomal subunit protein bL27 (97 aa).

The propeptide occupies 1 to 12 (MLKMTLNNLQLF). Residues 13–37 (AHKKGGGSTSNGRDSQAKRLGAKAA) form a disordered region.

The protein belongs to the bacterial ribosomal protein bL27 family. The N-terminus is cleaved by ribosomal processing cysteine protease Prp.

The protein is Large ribosomal subunit protein bL27 of Streptococcus pneumoniae serotype 2 (strain D39 / NCTC 7466).